Here is a 133-residue protein sequence, read N- to C-terminus: ATP synthase epsilon chain, chloroplastic (133 aa).

Belongs to the ATPase epsilon chain family. As to quaternary structure, F-type ATPases have 2 components, CF(1) - the catalytic core - and CF(0) - the membrane proton channel. CF(1) has five subunits: alpha(3), beta(3), gamma(1), delta(1), epsilon(1). CF(0) has three main subunits: a, b and c.

The protein localises to the plastid. It is found in the chloroplast thylakoid membrane. In terms of biological role, produces ATP from ADP in the presence of a proton gradient across the membrane. The protein is ATP synthase epsilon chain, chloroplastic of Morus indica (Mulberry).